We begin with the raw amino-acid sequence, 118 residues long: Holin-like protein CidA 2 (118 aa).

4 helical membrane passes run Val4–Val26, Gly33–Leu52, Leu62–Leu84, and Ile91–Leu113.

It belongs to the CidA/LrgA family. CidA subfamily.

The protein localises to the cell membrane. Its function is as follows. Increases the activity of extracellular murein hydrolases possibly by mediating their export via hole formation. Inhibited by the antiholin-like proteins LrgAB. In an unstressed cell, the LrgAB products probably inhibit the function of the CidA protein. When a cell is stressed by the addition of antibiotics or by other factors in the environment, CidA possibly oligomerizes within the bacterial cell membrane, creating lesions that disrupt the proton motive force, which in turn results in loss of cell viability. These lesions are also hypothesized to regulate the subsequent cell lysis by either allowing the murein hydrolases access to the cell wall substrate and/or regulating their activity by a possible change in the cell wall pH that results from loss of membrane potential. The chain is Holin-like protein CidA 2 (cidA2) from Bacillus cereus (strain ATCC 14579 / DSM 31 / CCUG 7414 / JCM 2152 / NBRC 15305 / NCIMB 9373 / NCTC 2599 / NRRL B-3711).